The primary structure comprises 103 residues: Large ribosomal subunit protein bL21 (103 aa).

Belongs to the bacterial ribosomal protein bL21 family. In terms of assembly, part of the 50S ribosomal subunit. Contacts protein L20.

This protein binds to 23S rRNA in the presence of protein L20. This chain is Large ribosomal subunit protein bL21, found in Desulfitobacterium hafniense (strain DSM 10664 / DCB-2).